A 508-amino-acid chain; its full sequence is UDP-N-acetylmuramoylalanine--D-glutamate ligase (508 aa).

An ATP-binding site is contributed by 138-144 (GTNGKTT). A disordered region spans residues 294–314 (FDEPAPRRKKDAPPPTRAGGR).

The protein belongs to the MurCDEF family.

The protein resides in the cytoplasm. It catalyses the reaction UDP-N-acetyl-alpha-D-muramoyl-L-alanine + D-glutamate + ATP = UDP-N-acetyl-alpha-D-muramoyl-L-alanyl-D-glutamate + ADP + phosphate + H(+). It participates in cell wall biogenesis; peptidoglycan biosynthesis. Its function is as follows. Cell wall formation. Catalyzes the addition of glutamate to the nucleotide precursor UDP-N-acetylmuramoyl-L-alanine (UMA). The chain is UDP-N-acetylmuramoylalanine--D-glutamate ligase from Bordetella parapertussis (strain 12822 / ATCC BAA-587 / NCTC 13253).